A 164-amino-acid polypeptide reads, in one-letter code: UPF0304 protein NT01EI_2691 (164 aa).

It belongs to the UPF0304 family.

This chain is UPF0304 protein NT01EI_2691, found in Edwardsiella ictaluri (strain 93-146).